We begin with the raw amino-acid sequence, 465 residues long: E3 ubiquitin-protein ligase TRIM38 (465 aa).

Residues 16-63 (CSICLSLMTNPVSINCGHSYCHLCITDFFKNPSQKQLRQETFCCPQCR) form an RING-type zinc finger. Position 70 is a phosphoserine (Ser70). A B box-type zinc finger spans residues 88–129 (DQEMSCEEHGEQFHLFCEDEGQLICWRCERAPQHKGHTTALV). Residues Cys93, His96, Cys115, and His121 each contribute to the Zn(2+) site. The 192-residue stretch at 274 to 465 (CNVSKLYFDV…SPLFLPPPGD (192 aa)) folds into the B30.2/SPRY domain.

In terms of assembly, interacts (via B30.2/SPRY domain) with TAB2 and TAB3. In terms of tissue distribution, ubiquitous.

Its subcellular location is the cytoplasm. It catalyses the reaction S-ubiquitinyl-[E2 ubiquitin-conjugating enzyme]-L-cysteine + [acceptor protein]-L-lysine = [E2 ubiquitin-conjugating enzyme]-L-cysteine + N(6)-ubiquitinyl-[acceptor protein]-L-lysine.. It functions in the pathway protein modification; protein ubiquitination. It participates in protein modification; protein sumoylation. In terms of biological role, E3 ubiquitin-protein and E3 SUMO-protein ligase that acts as a regulator of innate immunity. Acts as a negative regulator of type I interferon IFN-beta production by catalyzing 'Lys-48'-linked polyubiquitination of AZI2/NAP1, leading to its degradation. Mediates 'Lys-48'-linked polyubiquitination and proteasomal degradation of the critical TLR adapter TICAM1, inhibiting TLR3-mediated type I interferon signaling. Acts as positive regulator of the cGAS-STING pathway by acting as a E3 SUMO-protein ligase: mediates sumoylation of CGAS and STING, preventing their degradation and thereby activating the innate immune response to DNA virus. Also acts as a negative regulator of NF-kappa-B signaling independently of its E3 protein ligase activity by promoting lysosome-dependent degradation of TAB2 and TAB3 adapters. The chain is E3 ubiquitin-protein ligase TRIM38 from Homo sapiens (Human).